Reading from the N-terminus, the 445-residue chain is Adenylosuccinate synthetase (445 aa).

Residues Gly-24–Lys-30 and Gly-52–Thr-54 contribute to the GTP site. Residue Asp-25 is the Proton acceptor of the active site. Residues Asp-25 and Gly-52 each contribute to the Mg(2+) site. IMP contacts are provided by residues Asp-25–Lys-28, Asn-50–His-53, Thr-147, Arg-161, Asn-238, Thr-253, and Arg-317. His-53 functions as the Proton donor in the catalytic mechanism. Thr-313–Arg-319 lines the substrate pocket. GTP is bound by residues Arg-319, Lys-345–Asp-347, and Gly-427–Gly-429.

It belongs to the adenylosuccinate synthetase family. As to quaternary structure, homodimer. It depends on Mg(2+) as a cofactor.

It localises to the cytoplasm. The enzyme catalyses IMP + L-aspartate + GTP = N(6)-(1,2-dicarboxyethyl)-AMP + GDP + phosphate + 2 H(+). Its pathway is purine metabolism; AMP biosynthesis via de novo pathway; AMP from IMP: step 1/2. Its function is as follows. Plays an important role in the de novo pathway and in the salvage pathway of purine nucleotide biosynthesis. Catalyzes the first committed step in the biosynthesis of AMP from IMP. This chain is Adenylosuccinate synthetase, found in Malassezia globosa (strain ATCC MYA-4612 / CBS 7966) (Dandruff-associated fungus).